Here is a 329-residue protein sequence, read N- to C-terminus: GTP 3',8-cyclase (329 aa).

A Radical SAM core domain is found at 8-234 (AFARKFFYLR…QIRQRSDGPA (227 aa)). Position 17 (Arg17) interacts with GTP. Residues Cys24 and Cys28 each coordinate [4Fe-4S] cluster. Tyr30 provides a ligand contact to S-adenosyl-L-methionine. Residue Cys31 coordinates [4Fe-4S] cluster. Residue Arg68 participates in GTP binding. Gly72 serves as a coordination point for S-adenosyl-L-methionine. Thr99 lines the GTP pocket. Ser123 is a binding site for S-adenosyl-L-methionine. Lys160 is a binding site for GTP. Met194 serves as a coordination point for S-adenosyl-L-methionine. [4Fe-4S] cluster contacts are provided by Cys257 and Cys260. Position 262-264 (262-264 (RLR)) interacts with GTP. Position 274 (Cys274) interacts with [4Fe-4S] cluster.

Belongs to the radical SAM superfamily. MoaA family. In terms of assembly, monomer and homodimer. The cofactor is [4Fe-4S] cluster.

It carries out the reaction GTP + AH2 + S-adenosyl-L-methionine = (8S)-3',8-cyclo-7,8-dihydroguanosine 5'-triphosphate + 5'-deoxyadenosine + L-methionine + A + H(+). Its pathway is cofactor biosynthesis; molybdopterin biosynthesis. Catalyzes the cyclization of GTP to (8S)-3',8-cyclo-7,8-dihydroguanosine 5'-triphosphate. The chain is GTP 3',8-cyclase from Klebsiella pneumoniae (strain 342).